The sequence spans 529 residues: GMP synthase [glutamine-hydrolyzing] (529 aa).

The region spanning 13 to 204 is the Glutamine amidotransferase type-1 domain; that stretch reads PVLVVDFGAQ…LLETAGLEPT (192 aa). Catalysis depends on Cys90, which acts as the Nucleophile. Active-site residues include His178 and Glu180. The GMPS ATP-PPase domain maps to 205 to 403; that stretch reads WTAGNIAEQL…LGLPEEIVAR (199 aa). 233 to 239 serves as a coordination point for ATP; the sequence is SGGVDSA.

Homodimer.

The catalysed reaction is XMP + L-glutamine + ATP + H2O = GMP + L-glutamate + AMP + diphosphate + 2 H(+). The protein operates within purine metabolism; GMP biosynthesis; GMP from XMP (L-Gln route): step 1/1. Its function is as follows. Catalyzes the synthesis of GMP from XMP. The sequence is that of GMP synthase [glutamine-hydrolyzing] from Corynebacterium jeikeium (strain K411).